The sequence spans 157 residues: Ribosomal RNA large subunit methyltransferase H (157 aa).

S-adenosyl-L-methionine-binding positions include L74, G106, and L125–L130.

It belongs to the RNA methyltransferase RlmH family. In terms of assembly, homodimer.

It is found in the cytoplasm. The catalysed reaction is pseudouridine(1915) in 23S rRNA + S-adenosyl-L-methionine = N(3)-methylpseudouridine(1915) in 23S rRNA + S-adenosyl-L-homocysteine + H(+). Functionally, specifically methylates the pseudouridine at position 1915 (m3Psi1915) in 23S rRNA. The polypeptide is Ribosomal RNA large subunit methyltransferase H (Desulfovibrio desulfuricans (strain ATCC 27774 / DSM 6949 / MB)).